The sequence spans 715 residues: Polyribonucleotide nucleotidyltransferase (715 aa).

D493 and D499 together coordinate Mg(2+). Residues 560–619 form the KH domain; sequence PRMITIKINPEKIRDVIGKGGSVIRALTEETGTTIDISDDGVVTIASTSSEGMAEAKKRI. The region spanning 629–697 is the S1 motif domain; it reads GQVYEGTVLK…EKGRVRLSAK (69 aa).

The protein belongs to the polyribonucleotide nucleotidyltransferase family. The cofactor is Mg(2+).

The protein resides in the cytoplasm. It carries out the reaction RNA(n+1) + phosphate = RNA(n) + a ribonucleoside 5'-diphosphate. Its function is as follows. Involved in mRNA degradation. Catalyzes the phosphorolysis of single-stranded polyribonucleotides processively in the 3'- to 5'-direction. The polypeptide is Polyribonucleotide nucleotidyltransferase (Burkholderia multivorans (strain ATCC 17616 / 249)).